The following is a 313-amino-acid chain: Homoserine O-acetyltransferase (313 aa).

Cys142 (acyl-thioester intermediate) is an active-site residue. Lys163 and Ser191 together coordinate substrate. The Proton acceptor role is filled by His234. Residue Glu236 is part of the active site. Residue Arg248 coordinates substrate.

The protein belongs to the MetA family.

It is found in the cytoplasm. The catalysed reaction is L-homoserine + acetyl-CoA = O-acetyl-L-homoserine + CoA. It functions in the pathway amino-acid biosynthesis; L-methionine biosynthesis via de novo pathway; O-acetyl-L-homoserine from L-homoserine: step 1/1. Functionally, transfers an acetyl group from acetyl-CoA to L-homoserine, forming acetyl-L-homoserine. This Streptococcus gordonii (strain Challis / ATCC 35105 / BCRC 15272 / CH1 / DL1 / V288) protein is Homoserine O-acetyltransferase.